The following is a 1008-amino-acid chain: MKDSEHHHHGHNGFSKFLHKLGFGKSKGKSHKSNTSSIHERENTAAKGPASNVRPARPNVSTSSTSNEVRKSVPVGNPTVHTKTGSSSSPASKMRNTVNLQHIQAANQKTRNAEGERKVAQRRVQSDKAEANDAAMSSSAPTVDVSEGNSAAEPKITPDDSDTPRLNVDMNDKINVDEAAAKSDSKLNVDQINSTTESEKRVEKVNPNIANNPLKSPDAVAYSSETVSDEKQPTEHPVSANVPAKSEKAVCDENTKISLTNTEHYKFHSLRGDVEVVVGDLERDGRDTSLGDASVNEAAKETDVDSSRFISDEKAVTEDAMKTEHASNAPLTDERHFQFHSSEGDIEGIVGTMQRQRQSVSSYDTIVPSQFYKQKVVQNSPPSLLSTDNKIPESGSDHPSSQDNSSKASLVENSQTQSSTPRKPLPTTTSPKVNPEPHSESISDTRPSTPRKVPPSTVPKMNPKLQGGNSVTAPSTPSKVLPAMSPKVAPKFQGGRSSTAPSTPNKVLPAASAKAAPKLQEKAASFDIPNKSTIISTKSTVASPIKANENSPALKSKASFEFPKELDPDGTWNAPIPYPDANCPMAPTYRNLTSEQEEMYEEVLKYCLELKEIPVASNSSKKTDLIELERLWLTRECILRYLRATKWHVSNAKKRIVDTLVWRRHFGVNNMDPDEIQEENATGKQVLLGYDKDGRPCLYLYPARQNTKTSPLQIRHLVFSLECAIDLMPPGVETLALLINFKSSSNRSNPSVGQGKEVLNILQTHYCERLGRALVINIPWAVWGFFKLISPFIDPITREKLKFNEPLDRYVPKDQLDSNFGGSLHFEYHHEKYWPQLVELCKSRRLGILEKWRKMGSKIGTSEWDLKGGEEYVELMQQYVRPSLTNRSSSPTVTPTVNTDRQPKTLTNSADELSPQKRRVENPKPVVKDEGPVSIVEDEESTPVVTKKEDSIPVAQSTKADAGLDAENDLLPKSGSGVSETPAFSHARDVSTASFSDAVSFITADSIE.

3 disordered regions span residues M1–E247, D284–S306, and Q374–K514. The segment covering T79–T110 has biased composition (polar residues). 2 stretches are compositionally biased toward basic and acidic residues: residues R111–A131 and M170–L187. Polar residues-rich tracts occupy residues Q374–N389, D397–K432, G467–S478, and G495–N505. 2 positions are modified to phosphoserine: S525 and S559. Residues E675–Y828 form the CRAL-TRIO domain. Residues S883 to P982 form a disordered region. Residues T885 to T899 are compositionally biased toward low complexity. A phosphoserine mark is found at S888 and S890. Over residues S914–G931 the composition is skewed to basic and acidic residues.

The protein localises to the cell membrane. The polypeptide is CRAL-TRIO domain-containing protein C23B6.04c (Schizosaccharomyces pombe (strain 972 / ATCC 24843) (Fission yeast)).